Here is a 240-residue protein sequence, read N- to C-terminus: MAPQVDVLINKQILIERALVCVTTRITKAIAERGQGTIALSGGNTPKPLYEALARQALPWEKIHVFWGDERYVSVDHPDSNQRMARLAWLDQVDIPEANIHPMPTAAADPEQDAQTYENELATFFQVEAGHFPAFDLILLGLGDDGHTASLFPHTPALTVGDRLITVGNKDGQPRLTFTIPLINRARSVVFLVAGASKQHALGEIFAPEADPQQYPARFIQPQGELIWLLDQQAGENLRP.

This sequence belongs to the glucosamine/galactosamine-6-phosphate isomerase family. 6-phosphogluconolactonase subfamily.

It carries out the reaction 6-phospho-D-glucono-1,5-lactone + H2O = 6-phospho-D-gluconate + H(+). The protein operates within carbohydrate degradation; pentose phosphate pathway; D-ribulose 5-phosphate from D-glucose 6-phosphate (oxidative stage): step 2/3. Hydrolysis of 6-phosphogluconolactone to 6-phosphogluconate. The protein is 6-phosphogluconolactonase (pgl) of Synechocystis sp. (strain ATCC 27184 / PCC 6803 / Kazusa).